The following is a 184-amino-acid chain: uncharacterized protein (184 aa).

In terms of domain architecture, 4Fe-4S spans 72-135 (RKSQAILLIG…GIALGSAVKV (64 aa)). Positions 92, 95, 100, and 118 each coordinate [4Fe-4S] cluster.

The cofactor is [4Fe-4S] cluster.

This is an uncharacterized protein from Archaeoglobus fulgidus (strain ATCC 49558 / DSM 4304 / JCM 9628 / NBRC 100126 / VC-16).